Here is a 128-residue protein sequence, read N- to C-terminus: Large ribosomal subunit protein bL17 (128 aa).

Belongs to the bacterial ribosomal protein bL17 family. Part of the 50S ribosomal subunit. Contacts protein L32.

The protein is Large ribosomal subunit protein bL17 of Pseudomonas fluorescens (strain ATCC BAA-477 / NRRL B-23932 / Pf-5).